The following is a 199-amino-acid chain: Outer dense fiber protein 4 (199 aa).

Residues 1-14 (MNIRSLERAGRAGK) show a composition bias toward basic and acidic residues. The disordered stretch occupies residues 1–25 (MNIRSLERAGRAGKQDGVAVSPGQE). At serine 53 the chain carries Phosphoserine. The next 3 helical transmembrane spans lie at 68 to 88 (IAQV…VVMV), 109 to 128 (VTTK…LHIY), and 159 to 179 (LALG…IPGL).

Its subcellular location is the membrane. In terms of biological role, component of the outer dense fibers (ODF) of spermatozoa which could be involved in sperm tail structure, sperm movement and general organization of cellular cytoskeleton. The sequence is that of Outer dense fiber protein 4 (ODF4) from Bos taurus (Bovine).